A 798-amino-acid polypeptide reads, in one-letter code: Exo-1,4-beta-xylosidase xlnD (798 aa).

A signal peptide spans 1–20 (MPGAASIVAVLAALLPTALG). Residues asparagine 23, asparagine 87, asparagine 142, and asparagine 237 are each glycosylated (N-linked (GlcNAc...) asparagine). The active site involves aspartate 310. N-linked (GlcNAc...) asparagine glycosylation is found at asparagine 326, asparagine 391, asparagine 404, asparagine 443, asparagine 480, asparagine 522, asparagine 618, asparagine 645, asparagine 658, asparagine 685, and asparagine 707.

Belongs to the glycosyl hydrolase 3 family.

It is found in the secreted. The enzyme catalyses Hydrolysis of (1-&gt;4)-beta-D-xylans, to remove successive D-xylose residues from the non-reducing termini.. It participates in glycan degradation; xylan degradation. Functionally, xylan 1,4-beta-xylosidase involved in the hydrolysis of xylan, a major structural heterogeneous polysaccharide found in plant biomass representing the second most abundant polysaccharide in the biosphere, after cellulose. The polypeptide is Exo-1,4-beta-xylosidase xlnD (xlnD) (Aspergillus oryzae (strain ATCC 42149 / RIB 40) (Yellow koji mold)).